The chain runs to 440 residues: Argininosuccinate lyase (440 aa).

It belongs to the lyase 1 family. Argininosuccinate lyase subfamily.

It is found in the cytoplasm. It catalyses the reaction 2-(N(omega)-L-arginino)succinate = fumarate + L-arginine. It participates in amino-acid biosynthesis; L-arginine biosynthesis; L-arginine from L-ornithine and carbamoyl phosphate: step 3/3. The protein is Argininosuccinate lyase of Clostridium botulinum (strain Okra / Type B1).